The following is a 222-amino-acid chain: Thymidylate kinase (222 aa).

ATP is bound by residues 29–34 and Arg-111; that span reads RVGKST. An LID region spans residues 146–170; the sequence is LSMSSEDATKRGEYGGERYEKLEFQ.

This sequence belongs to the thymidylate kinase family. In terms of assembly, homodimer. Mg(2+) serves as cofactor.

It carries out the reaction dTMP + ATP = dTDP + ADP. The protein operates within pyrimidine metabolism; dTTP biosynthesis. Catalyzes the phosphorylation of thymidine monophosphate (dTMP) to thymidine diphosphate (dTDP), the immediate precursor for the DNA building block dTTP, with ATP as the preferred phosphoryl donor in the presence of Mg(2+). This chain is Thymidylate kinase (dtymk), found in Dictyostelium discoideum (Social amoeba).